The chain runs to 429 residues: Probable beta-1,3-galactosyl-O-glycosyl-glycoprotein beta-1,6-N-acetylglucosaminyltransferase 7 (429 aa).

Residues 1–8 are Cytoplasmic-facing; that stretch reads MSQLRATK. The helical; Signal-anchor for type II membrane protein transmembrane segment at 9–25 threads the bilayer; sequence PGILVCAAIGIFVFLYL. Residues 26–429 lie on the Extracellular side of the membrane; sequence RNPTSEDPEE…ESHLNRRLNP (404 aa). Intrachain disulfides connect Cys53–Cys205, Cys139–Cys354, Cys160–Cys187, and Cys363–Cys394. An N-linked (GlcNAc...) asparagine glycan is attached at Asn87. Asn272 carries an N-linked (GlcNAc...) asparagine glycan.

The protein belongs to the glycosyltransferase 14 family.

The protein resides in the golgi apparatus membrane. It participates in protein modification; protein glycosylation. Probable glycosyltransferase. The polypeptide is Probable beta-1,3-galactosyl-O-glycosyl-glycoprotein beta-1,6-N-acetylglucosaminyltransferase 7 (Sus scrofa (Pig)).